Here is a 475-residue protein sequence, read N- to C-terminus: Ribulose bisphosphate carboxylase large chain (475 aa).

The propeptide occupies 1–2 (MS). At Pro3 the chain carries N-acetylproline. Lys14 carries the N6,N6,N6-trimethyllysine modification. Substrate is bound by residues Asn123 and Thr173. The active-site Proton acceptor is Lys175. Lys177 is a binding site for substrate. The Mg(2+) site is built by Lys201, Asp203, and Glu204. At Lys201 the chain carries N6-carboxylysine. His294 functions as the Proton acceptor in the catalytic mechanism. Substrate-binding residues include Arg295, His327, and Ser379.

Belongs to the RuBisCO large chain family. Type I subfamily. Heterohexadecamer of 8 large chains and 8 small chains; disulfide-linked. The disulfide link is formed within the large subunit homodimers. The cofactor is Mg(2+). The disulfide bond which can form in the large chain dimeric partners within the hexadecamer appears to be associated with oxidative stress and protein turnover.

The protein localises to the plastid. The protein resides in the chloroplast. It carries out the reaction 2 (2R)-3-phosphoglycerate + 2 H(+) = D-ribulose 1,5-bisphosphate + CO2 + H2O. The catalysed reaction is D-ribulose 1,5-bisphosphate + O2 = 2-phosphoglycolate + (2R)-3-phosphoglycerate + 2 H(+). In terms of biological role, ruBisCO catalyzes two reactions: the carboxylation of D-ribulose 1,5-bisphosphate, the primary event in carbon dioxide fixation, as well as the oxidative fragmentation of the pentose substrate in the photorespiration process. Both reactions occur simultaneously and in competition at the same active site. The polypeptide is Ribulose bisphosphate carboxylase large chain (Pseudolarix amabilis (Golden larch)).